The primary structure comprises 96 residues: MAEVEETLKRLQSQKGVQGIIVVNTEGIPIKSTMDNPTTTQYASLMHSFILKARSTVRDIDPQNDLTFLRIRSKKNEIMVAPDKDYFLIVIQNPTE.

The residue at position 2 (A2) is an N-acetylalanine.

Belongs to the GAMAD family. Homodimer. The cytoplasmic dynein 1 complex consists of two catalytic heavy chains (HCs) and a number of non-catalytic subunits presented by intermediate chains (ICs), light intermediate chains (LICs) and light chains (LCs); the composition seems to vary in respect to the IC, LIC and LC composition. The heavy chain homodimer serves as a scaffold for the probable homodimeric assembly of the respective non-catalytic subunits. The ICs and LICs bind directly to the HC dimer and the LCs assemble on the IC dimer. Interacts with DYNLRB2. Interacts with DYNC1I1 and DYNC1I2. Interacts with RAB6A isoform 1 (GTP-bound); the interaction is direct. Interacts with RAB6A isoform 2 (GDP-bound); the interaction is direct. Interacts with RAB6B (GDP-bound). In terms of tissue distribution, high expression in heart, liver, brain and pancreas; moderate in placenta, skeletal muscle and kidney; low in lung, prostate, testis, small intestine and colon. Isoform 1 expression is up-regulated in 64% hepatocellular carcinoma (HCC) patients.

It is found in the cytoplasm. The protein localises to the cytoskeleton. In terms of biological role, acts as one of several non-catalytic accessory components of the cytoplasmic dynein 1 complex that are thought to be involved in linking dynein to cargos and to adapter proteins that regulate dynein function. Cytoplasmic dynein 1 acts as a motor for the intracellular retrograde motility of vesicles and organelles along microtubules. The chain is Dynein light chain roadblock-type 1 from Homo sapiens (Human).